The following is a 332-amino-acid chain: DNA-directed RNA polymerase subunit alpha (332 aa).

The segment at 1 to 244 (MKKHAKVYYS…AHLNLLADVE (244 aa)) is alpha N-terminal domain (alpha-NTD). The interval 259 to 332 (IKEEPIRRFS…NYKNENKGEN (74 aa)) is alpha C-terminal domain (alpha-CTD).

It belongs to the RNA polymerase alpha chain family. As to quaternary structure, homodimer. The RNAP catalytic core consists of 2 alpha, 1 beta, 1 beta' and 1 omega subunit. When a sigma factor is associated with the core the holoenzyme is formed, which can initiate transcription.

It catalyses the reaction RNA(n) + a ribonucleoside 5'-triphosphate = RNA(n+1) + diphosphate. Functionally, DNA-dependent RNA polymerase catalyzes the transcription of DNA into RNA using the four ribonucleoside triphosphates as substrates. In Mesomycoplasma hyopneumoniae (strain 232) (Mycoplasma hyopneumoniae), this protein is DNA-directed RNA polymerase subunit alpha.